A 57-amino-acid polypeptide reads, in one-letter code: UPF0337 protein SAV_1088 (57 aa).

2 stretches are compositionally biased toward basic and acidic residues: residues 1-15 (MAGD…EQAK) and 36-57 (QAEK…VFKH). A disordered region spans residues 1-57 (MAGDQKAKAKMEQAKGKAKAAAGRAVGNERMAAEGQAEKSKGDARQAKEKTKDVFKH).

The protein belongs to the UPF0337 (CsbD) family.

The sequence is that of UPF0337 protein SAV_1088 from Streptomyces avermitilis (strain ATCC 31267 / DSM 46492 / JCM 5070 / NBRC 14893 / NCIMB 12804 / NRRL 8165 / MA-4680).